The sequence spans 764 residues: MKPFQGITFCPTAINNEILAKKISKKIIKLGGIFSKDLTRQVNVLVVGSTTNTNKFKFAVKHRFDIIFIDIQAIDDIYQLWLSGENILPDSNTATMTGSTYEMLKILYRRFSFKYLHNFNIFIGRITDTNITSIDSLVRSIKKLGCSSYNYQNFVIKDTSSHNDDDDQGQNGQISIFVTDTLLGARVNAAIEQNIPIVHFKWILDCQKRSALLPYDPYYLLPNIKDLPYDSIGSNSCDCWDKINTTFPTNIDAQSSLQRQQSSSTLTPSLPKTSSLLNKFKPKGEKIWDKAMSLQQHSKTNFSVLGQSPLSINNKQEDLSDNSTLIFKNCAFIIHHIFPGNHRSILTKIVVQNGGKIETSYLSGIYDHSYYIIPSNKALDSFNDLPEIIDDNDGIVTEFFIERCLYYQKLLHPIDLWSKPFLSTIEFQVSSSSKLLHHEFSSSPFLNVTITGFSGVELLHLTKVLNLLKPMGINYVEYLNKSTDILLINLAALPSIPKTHPLWSNEFSDLFTQFCINNNNDDPGDNNRKDFQNNSILRNSMKRKIEYIKKFHSIPVVTPAFIFKLLSAASGENNEIFLNNIKWCIICPRGHKDDFKCKIKKPYYTSISSEKKYQNNDPKIDKTILLKRNNSSLSEHSMKDTKNELLQKIRETDSGRKKRSVSSSIMDVSSERQMPDTKRIKLESLPKNFVPKQIKRTTSWGTIMSENVPTEQPTAISNPEEIPRTEEVSHTQVTYGSIQDKKRTASLEKPMRRQTRNQTKELDS.

BRCT domains are found at residues 1–99, 129–220, and 322–418; these read MKPF…MTGS, TNIT…PYYL, and NSTL…DLWS. Disordered regions lie at residues 651-675 and 710-764; these read ETDSGRKKRSVSSSIMDVSSERQMP and TEQP…ELDS. Over residues 739 to 751 the composition is skewed to basic and acidic residues; that stretch reads QDKKRTASLEKPM.

In terms of assembly, interacts with SLD2.

Its subcellular location is the nucleus. Functionally, has a role in the initiation of DNA replication. Required at S-phase checkpoint. Required for the association of PSF1 with origins. Also required for the proper activation of RAD53 in response to DNA damage and replication blocks. Multicopy suppressor of DPB2 mutation. Overexpression restores the growth defect conferred by POL2 mutation. This is DNA replication regulator DPB11 (DPB11) from Saccharomyces cerevisiae (strain ATCC 204508 / S288c) (Baker's yeast).